Consider the following 151-residue polypeptide: MGRMHSAGKGISSSAIPYSRNAPSWFKLSSDEVVEQVIKYARKGLTPSQIGVILRDAHGVSQAKIVTGNKVLRILKSNGLAPELPEDLYFLIKKAVAVRKHLERNRKDKDSKFRLILIESRIHRLARYYRTVSVLPPNWKYESATASALVA.

The protein belongs to the universal ribosomal protein uS15 family.

The sequence is that of Small ribosomal subunit protein uS15 (RPS13) from Candida maltosa (Yeast).